A 453-amino-acid chain; its full sequence is Tubulin delta chain (453 aa).

143 to 149 (AGGTGSG) contacts GTP.

The protein belongs to the tubulin family. In terms of assembly, found in a complex with TEDC1, TEDC2, TUBE1 and TUBD1.

The protein localises to the nucleus. It localises to the cytoplasm. It is found in the cytoskeleton. Its subcellular location is the microtubule organizing center. The protein resides in the centrosome. The protein localises to the centriole. It localises to the cell projection. It is found in the cilium. Acts as a positive regulator of hedgehog signaling and regulates ciliary function. This is Tubulin delta chain (TUBD1) from Canis lupus familiaris (Dog).